We begin with the raw amino-acid sequence, 91 residues long: Sec-independent protein translocase protein TatAt (91 aa).

The helical transmembrane segment at 9 to 29 (FPGLPGGPELLVVLLIVVLLF) threads the bilayer. The disordered stretch occupies residues 48-91 (FQRGREEIEDELQDMTGDDDEDDATSESSADSVSTDSVSTESSN). Residues 54 to 72 (EIEDELQDMTGDDDEDDAT) are compositionally biased toward acidic residues. Over residues 73-91 (SESSADSVSTDSVSTESSN) the composition is skewed to low complexity.

This sequence belongs to the TatA/E family. As to quaternary structure, forms a complex with TatC. Cytoplasmic and membrane-bound TatA form high-molecular-weight complexes.

It is found in the cell membrane. The protein resides in the cytoplasm. Its function is as follows. Part of the twin-arginine translocation (Tat) system that transports large folded proteins containing a characteristic twin-arginine motif in their signal peptide across membranes. TatA could form the protein-conducting channel of the Tat system. The protein is Sec-independent protein translocase protein TatAt of Haloferax volcanii (strain ATCC 29605 / DSM 3757 / JCM 8879 / NBRC 14742 / NCIMB 2012 / VKM B-1768 / DS2) (Halobacterium volcanii).